Reading from the N-terminus, the 167-residue chain is G/U mismatch-specific DNA glycosylase (167 aa).

This sequence belongs to the uracil-DNA glycosylase (UDG) superfamily. TDG/mug family. As to quaternary structure, binds DNA as a monomer.

Its subcellular location is the cytoplasm. The catalysed reaction is Specifically hydrolyzes mismatched double-stranded DNA and polynucleotides, releasing free uracil.. Functionally, excises ethenocytosine and uracil, which can arise by alkylation or deamination of cytosine, respectively, from the corresponding mispairs with guanine in ds-DNA. It is capable of hydrolyzing the carbon-nitrogen bond between the sugar-phosphate backbone of the DNA and the mispaired base. The complementary strand guanine functions in substrate recognition. Required for DNA damage lesion repair in stationary-phase cells. The protein is G/U mismatch-specific DNA glycosylase of Pectobacterium atrosepticum (strain SCRI 1043 / ATCC BAA-672) (Erwinia carotovora subsp. atroseptica).